The chain runs to 462 residues: Microspherule protein 1 (462 aa).

Residue M1 is modified to N-acetylmethionine. The disordered stretch occupies residues 1–130 (MDKDSQGLLD…KSKQPLQVTK (130 aa)). Position 22 is a phosphoserine (S22). Positions 43-55 (PKRRSSSRFIKRK) are enriched in basic residues. Residues 81 to 90 (SGRCSGSEPS) are compositionally biased toward low complexity. Phosphoserine is present on S102. T103 is modified (phosphothreonine). Residues 103 to 112 (TPVPPSPAPT) show a composition bias toward pro residues. Position 108 is a phosphoserine (S108). The Nuclear localization signal signature appears at 113–123 (PGLTKRVKKSK). K123 and K130 each carry N6-acetyllysine. Position 282 is a phosphoserine (S282). The stretch at 301-335 (LEHELTVADRRQKREIRQLEQELHKWQVLVDSITG) forms a coiled coil. In terms of domain architecture, FHA spans 363 to 419 (ITLGRATKDNQIDVDLSLEGPAWKISRKQGVIKLKNNGDFFIANEGRRPIYIDGRPV). The UBR5-degron motif lies at 389–396 (RKQGVIKL).

In terms of assembly, component of the chromatin remodeling INO80 complex; specifically part of a complex module associated with the N-terminus of INO80. Component of some MLL1/MLL complex, at least composed of the core components KMT2A/MLL1, ASH2L, HCFC1, WDR5 and RBBP5, as well as the facultative components BACC1, CHD8, E2F6, HSP70, INO80C, KANSL1, LAS1L, MAX, MCRS1, MGA, KAT8/MOF, PELP1, PHF20, PRP31, RING2, RUVB1/TIP49A, RUVB2/TIP49B, SENP3, TAF1, TAF4, TAF6, TAF7, TAF9 and TEX10. Component of the NSL complex at least composed of MOF/KAT8, KANSL1, KANSL2, KANSL3, MCRS1, PHF20, OGT1/OGT, WDR5 and HCFC1. Interacts with NOP2. Interacts with PINX1. Interacts with TERT. Interacts with CCDC85B. Interacts with DAXX. Interacts (via N-terminus) with FMR1 (via phosphorylated form). Interacts with FXR1 and FXR2. Interacts (via C-terminus) with NDE1 (via C-terminus); phosphorylation of NDE1 inhibits the interaction. Interacts (via C-terminus) with ZNF375. Interacts (via C-terminus) with active GTP-bound RHEB (via N-terminus) under conditions of high amino acid concentration; the interaction promotes mTORC1 complex activation by RHEB. Interacts (via N-terminus) with the mTORC1 complex; the interaction ensures mTORC1 activation by RHEB. Interacts with DYNC1I1; the interaction is required for the proper distribution of centriolar satellites. Interacts with TTBK2; the interaction is required for recruitment of TTBK2 to the mother centriole. Interacts with KIF2A; the interaction occurs during mitosis and facilitates chromosome alignment. Post-translationally, ubiquitinated by UBR5 when not assembled in the INO80 complex, leading to its degradation: UBR5 recognizes and binds a degron that is not accessible when MCRS1 is part of the INO80 complex. Phosphorylated by AURKA on Ser-35 and/or Ser-36 during mitosis which is required for kinetochore fiber assembly and mitotic progression but not for spindle localization or for chromosome-induced microtuble aster formation. Also phosphorylated by AURKA on Ser-85 and/or Ser-87. Phosphorylated by TTK/MPS1 which enhances recruitment of KIF2A to the minus end of spindle microtubules and facilitates precise chromosome segregation.

The protein resides in the nucleus. Its subcellular location is the nucleolus. It localises to the cytoplasm. It is found in the cytoskeleton. The protein localises to the microtubule organizing center. The protein resides in the centrosome. Its subcellular location is the spindle pole. It localises to the chromosome. It is found in the centromere. The protein localises to the kinetochore. The protein resides in the lysosome. Its subcellular location is the centriolar satellite. In terms of biological role, modulates the transcription repressor activity of DAXX by recruiting it to the nucleolus. As part of the NSL complex it may be involved in acetylation of nucleosomal histone H4 on several lysine residues. Putative regulatory component of the chromatin remodeling INO80 complex which is involved in transcriptional regulation, DNA replication and probably DNA repair. May also be an inhibitor of TERT telomerase activity. Binds to G-quadruplex structures in mRNA. Binds to RNA homomer poly(G) and poly(U). Maintains RHEB at the lysosome in its active GTP-bound form and prevents its interaction with the mTORC1 complex inhibitor TSC2, ensuring activation of the mTORC1 complex by RHEB. Stabilizes the minus ends of kinetochore fibers by protecting them from depolymerization, ensuring functional spindle assembly during mitosis. Following phosphorylation by TTK/MPS1, enhances recruitment of KIF2A to the minus ends of mitotic spindle microtubules which promotes chromosome alignment. Regulates the morphology of microtubule minus ends in mitotic spindle by maintaining them in a closed conformation characterized by the presence of an electron-dense cap. Regulates G2/M transition and spindle assembly during oocyte meiosis. Mediates histone modifications and transcriptional regulation in germinal vesicle oocytes which are required for meiotic progression. Also regulates microtubule nucleation and spindle assembly by activating aurora kinases during oocyte meiosis. Contributes to the establishment of centriolar satellites and also plays a role in primary cilium formation by recruiting TTBK2 to the mother centriole which is necessary for removal of the CP110 cap from the mother centriole, an early step in ciliogenesis. Required for epiblast development during early embryogenesis. Essential for cell viability. This chain is Microspherule protein 1 (Mcrs1), found in Mus musculus (Mouse).